Reading from the N-terminus, the 85-residue chain is Protein C4 (85 aa).

Gly2 carries N-myristoyl glycine; by host lipidation. Residues 42-65 (LNPAPTSSPTSTRTETQLNGGNSR) are disordered. The segment covering 44-57 (PAPTSSPTSTRTET) has biased composition (low complexity).

Belongs to the geminiviridae protein AC4/C4 family. In terms of assembly, interacts with Arabidopsis thaliana RCH2, ASK7/ASK-eta and ASK6/ASK-zeta. Post-translationally, phosphorylated by Arabidopsis thaliana ASK7/ASK-eta mainly on threonine and serine residues. As to expression, expressed in vascular tissues, and especially in phloem cells.

The protein resides in the host cell membrane. Functionally, major determinant of pathogenesis that affects the hyperplastic response of the host to viral infection. Mediates the induction of cell division in permissive cells, mainly in phloem. May act as a suppressor of RNA-mediated gene silencing, also known as post-transcriptional gene silencing (PTGS), a mechanism of plant viral defense that limits the accumulation of viral RNAs. The chain is Protein C4 from Beet curly top virus (strain California/Logan) (BCTV).